Here is a 38-residue protein sequence, read N- to C-terminus: Photosystem II reaction center protein L (38 aa).

The chain crosses the membrane as a helical span at residues 17–37 (SLYWGLLLIFVLAVLFSSYIF).

Belongs to the PsbL family. As to quaternary structure, PSII is composed of 1 copy each of membrane proteins PsbA, PsbB, PsbC, PsbD, PsbE, PsbF, PsbH, PsbI, PsbJ, PsbK, PsbL, PsbM, PsbT, PsbY, PsbZ, Psb30/Ycf12, at least 3 peripheral proteins of the oxygen-evolving complex and a large number of cofactors. It forms dimeric complexes.

The protein localises to the plastid. It localises to the chloroplast thylakoid membrane. In terms of biological role, one of the components of the core complex of photosystem II (PSII). PSII is a light-driven water:plastoquinone oxidoreductase that uses light energy to abstract electrons from H(2)O, generating O(2) and a proton gradient subsequently used for ATP formation. It consists of a core antenna complex that captures photons, and an electron transfer chain that converts photonic excitation into a charge separation. This subunit is found at the monomer-monomer interface and is required for correct PSII assembly and/or dimerization. This Bigelowiella natans (Pedinomonas minutissima) protein is Photosystem II reaction center protein L.